Consider the following 317-residue polypeptide: Acetyl-coenzyme A carboxylase carboxyl transferase subunit alpha (317 aa).

The 255-residue stretch at Arg39 to Gly293 folds into the CoA carboxyltransferase C-terminal domain.

It belongs to the AccA family. As to quaternary structure, acetyl-CoA carboxylase is a heterohexamer composed of biotin carboxyl carrier protein (AccB), biotin carboxylase (AccC) and two subunits each of ACCase subunit alpha (AccA) and ACCase subunit beta (AccD).

The protein resides in the cytoplasm. It carries out the reaction N(6)-carboxybiotinyl-L-lysyl-[protein] + acetyl-CoA = N(6)-biotinyl-L-lysyl-[protein] + malonyl-CoA. It participates in lipid metabolism; malonyl-CoA biosynthesis; malonyl-CoA from acetyl-CoA: step 1/1. Component of the acetyl coenzyme A carboxylase (ACC) complex. First, biotin carboxylase catalyzes the carboxylation of biotin on its carrier protein (BCCP) and then the CO(2) group is transferred by the carboxyltransferase to acetyl-CoA to form malonyl-CoA. The sequence is that of Acetyl-coenzyme A carboxylase carboxyl transferase subunit alpha from Methylobacterium nodulans (strain LMG 21967 / CNCM I-2342 / ORS 2060).